A 469-amino-acid polypeptide reads, in one-letter code: 3-isopropylmalate dehydratase large subunit (469 aa).

[4Fe-4S] cluster-binding residues include Cys347, Cys410, and Cys413.

Belongs to the aconitase/IPM isomerase family. LeuC type 1 subfamily. Heterodimer of LeuC and LeuD. [4Fe-4S] cluster serves as cofactor.

The enzyme catalyses (2R,3S)-3-isopropylmalate = (2S)-2-isopropylmalate. Its pathway is amino-acid biosynthesis; L-leucine biosynthesis; L-leucine from 3-methyl-2-oxobutanoate: step 2/4. Functionally, catalyzes the isomerization between 2-isopropylmalate and 3-isopropylmalate, via the formation of 2-isopropylmaleate. This chain is 3-isopropylmalate dehydratase large subunit, found in Ralstonia nicotianae (strain ATCC BAA-1114 / GMI1000) (Ralstonia solanacearum).